Reading from the N-terminus, the 320-residue chain is o-succinylbenzoate synthase (320 aa).

Lysine 133 (proton donor) is an active-site residue. Residues aspartate 161, glutamate 190, and aspartate 213 each coordinate Mg(2+). The Proton acceptor role is filled by lysine 235.

This sequence belongs to the mandelate racemase/muconate lactonizing enzyme family. MenC type 1 subfamily. It depends on a divalent metal cation as a cofactor.

It carries out the reaction (1R,6R)-6-hydroxy-2-succinyl-cyclohexa-2,4-diene-1-carboxylate = 2-succinylbenzoate + H2O. It participates in quinol/quinone metabolism; 1,4-dihydroxy-2-naphthoate biosynthesis; 1,4-dihydroxy-2-naphthoate from chorismate: step 4/7. The protein operates within quinol/quinone metabolism; menaquinone biosynthesis. Its function is as follows. Converts 2-succinyl-6-hydroxy-2,4-cyclohexadiene-1-carboxylate (SHCHC) to 2-succinylbenzoate (OSB). The sequence is that of o-succinylbenzoate synthase from Escherichia coli O127:H6 (strain E2348/69 / EPEC).